The chain runs to 164 residues: uncharacterized protein (164 aa).

The segment covering 1 to 17 (MNSRVPATQSWFSSHLP) has biased composition (polar residues). Residues 1-48 (MNSRVPATQSWFSSHLPTTEPDLEPATAAEGSTTETATLSPETTSFND) are disordered. Residues 24-45 (EPATAAEGSTTETATLSPETTS) show a composition bias toward low complexity. The chain crosses the membrane as a helical span at residues 64–84 (MLLSFGIITVIGLAVAMVLYI). Residues 106 to 130 (TEEQDELEQELLEHGRDAASMQAAA) adopt a coiled-coil conformation.

It is found in the membrane. This is an uncharacterized protein from Mus musculus (Mouse).